The primary structure comprises 197 residues: Small ribosomal subunit protein uS4c (197 aa).

An S4 RNA-binding domain is found at 84-143 (MRLDNIIFQLGMASTIPAARQLVCHRHILVNHRVVDIPSYRCKPRDIISIRNRPTSANAL).

It belongs to the universal ribosomal protein uS4 family. Part of the 30S ribosomal subunit. Contacts protein S5. The interaction surface between S4 and S5 is involved in control of translational fidelity.

The protein resides in the plastid. Its subcellular location is the chloroplast. One of the primary rRNA binding proteins, it binds directly to 16S rRNA where it nucleates assembly of the body of the 30S subunit. Functionally, with S5 and S12 plays an important role in translational accuracy. This is Small ribosomal subunit protein uS4c (rps4) from Adiantum capillus-veneris (Maidenhair fern).